The primary structure comprises 343 residues: Methionine import ATP-binding protein MetN (343 aa).

The region spanning 2–241 (IKLSNITKVF…PKTPLAQKFI (240 aa)) is the ABC transporter domain. Residue 40-46 (SGAGKST) participates in ATP binding. Positions 265-343 (CVPMLRLEFT…HVKVEVLGYV (79 aa)) are C2 domain. L-methionine is bound by residues 278 to 283 (VDAPLL) and 295 to 296 (NI).

Belongs to the ABC transporter superfamily. Methionine importer (TC 3.A.1.24) family. The complex is composed of two ATP-binding proteins (MetN), two transmembrane proteins (MetI) and a solute-binding protein (MetQ).

The protein resides in the cell inner membrane. The enzyme catalyses L-methionine(out) + ATP + H2O = L-methionine(in) + ADP + phosphate + H(+). It catalyses the reaction D-methionine(out) + ATP + H2O = D-methionine(in) + ADP + phosphate + H(+). ATPase activity is inhibited by intracellular L-methionine. Binding of methionine to the dimerized C-terminal regulatory domain stabilizes an inward-facing, ATPase-inactive conformation of the transporter, and as a consequence, the rate of ATP hydrolysis decreases. ADP is a competitive inhibitor. In terms of biological role, part of the ABC transporter complex MetNIQ involved in methionine import. Responsible for energy coupling to the transport system. It has also been shown to be involved in formyl-L-methionine transport. The protein is Methionine import ATP-binding protein MetN of Escherichia coli (strain K12).